We begin with the raw amino-acid sequence, 87 residues long: U3-theraphotoxin-Hhn1l (87 aa).

Residues 1-24 form the signal peptide; sequence MVNMKASMFLTFAGLVLLFVVCYA. Positions 25 to 52 are excised as a propeptide; that stretch reads SESEEKEFPKEMLSSIFAVDNDFKQEER. Intrachain disulfides connect C54/C67, C61/C72, and C66/C79.

This sequence belongs to the neurotoxin 10 (Hwtx-1) family. 51 (Hntx-8) subfamily. Hntx-8 sub-subfamily. In terms of tissue distribution, expressed by the venom gland.

The protein localises to the secreted. In terms of biological role, ion channel inhibitor. The chain is U3-theraphotoxin-Hhn1l from Cyriopagopus hainanus (Chinese bird spider).